A 120-amino-acid polypeptide reads, in one-letter code: NAD(P)H-quinone oxidoreductase subunit 3 (120 aa).

Helical transmembrane passes span 6 to 26 (GYDA…LALV), 64 to 84 (MFAL…PWAV), and 89 to 109 (LGLL…VALA).

The protein belongs to the complex I subunit 3 family. NDH-1 can be composed of about 15 different subunits; different subcomplexes with different compositions have been identified which probably have different functions.

The protein resides in the cellular thylakoid membrane. It carries out the reaction a plastoquinone + NADH + (n+1) H(+)(in) = a plastoquinol + NAD(+) + n H(+)(out). It catalyses the reaction a plastoquinone + NADPH + (n+1) H(+)(in) = a plastoquinol + NADP(+) + n H(+)(out). NDH-1 shuttles electrons from an unknown electron donor, via FMN and iron-sulfur (Fe-S) centers, to quinones in the respiratory and/or the photosynthetic chain. The immediate electron acceptor for the enzyme in this species is believed to be plastoquinone. Couples the redox reaction to proton translocation, and thus conserves the redox energy in a proton gradient. Cyanobacterial NDH-1 also plays a role in inorganic carbon-concentration. In Synechococcus sp. (strain CC9605), this protein is NAD(P)H-quinone oxidoreductase subunit 3.